A 72-amino-acid polypeptide reads, in one-letter code: MKKDIHPKAVPAKIIYQGKVVMETLSTRPEIHVDVWSGAHPFWTGEERFVDTEGRVDKFNKRFGDSYRKNRK.

It belongs to the bacterial ribosomal protein bL31 family. Type A subfamily. Part of the 50S ribosomal subunit.

Its function is as follows. Binds the 23S rRNA. The protein is Large ribosomal subunit protein bL31 of Deinococcus geothermalis (strain DSM 11300 / CIP 105573 / AG-3a).